Reading from the N-terminus, the 149-residue chain is Nucleoside diphosphate kinase (149 aa).

ATP is bound by residues lysine 11, phenylalanine 59, arginine 87, threonine 93, arginine 104, and asparagine 114. Histidine 117 acts as the Pros-phosphohistidine intermediate in catalysis.

Belongs to the NDK family. As to quaternary structure, homotetramer. Mg(2+) is required as a cofactor.

The protein resides in the cytoplasm. It carries out the reaction a 2'-deoxyribonucleoside 5'-diphosphate + ATP = a 2'-deoxyribonucleoside 5'-triphosphate + ADP. The catalysed reaction is a ribonucleoside 5'-diphosphate + ATP = a ribonucleoside 5'-triphosphate + ADP. Functionally, major role in the synthesis of nucleoside triphosphates other than ATP. The ATP gamma phosphate is transferred to the NDP beta phosphate via a ping-pong mechanism, using a phosphorylated active-site intermediate. The polypeptide is Nucleoside diphosphate kinase (Treponema pallidum (strain Nichols)).